The primary structure comprises 501 residues: Ribose import ATP-binding protein RbsA 1 (501 aa).

2 ABC transporter domains span residues 5–241 (LQLK…VGRK) and 252–495 (APGD…VGKL). 37-44 (GENGAGKS) contributes to the ATP binding site.

This sequence belongs to the ABC transporter superfamily. Ribose importer (TC 3.A.1.2.1) family. The complex is composed of an ATP-binding protein (RbsA), two transmembrane proteins (RbsC) and a solute-binding protein (RbsB).

It localises to the cell inner membrane. The catalysed reaction is D-ribose(out) + ATP + H2O = D-ribose(in) + ADP + phosphate + H(+). In terms of biological role, part of the ABC transporter complex RbsABC involved in ribose import. Responsible for energy coupling to the transport system. The chain is Ribose import ATP-binding protein RbsA 1 from Escherichia coli O157:H7.